Consider the following 184-residue polypeptide: Peptide deformylase 2 (184 aa).

C110 and H153 together coordinate Fe cation. E154 is an active-site residue. H157 is a Fe cation binding site.

Belongs to the polypeptide deformylase family. Fe(2+) is required as a cofactor.

The catalysed reaction is N-terminal N-formyl-L-methionyl-[peptide] + H2O = N-terminal L-methionyl-[peptide] + formate. Removes the formyl group from the N-terminal Met of newly synthesized proteins. Requires at least a dipeptide for an efficient rate of reaction. N-terminal L-methionine is a prerequisite for activity but the enzyme has broad specificity at other positions. In Bacillus subtilis (strain 168), this protein is Peptide deformylase 2 (defB).